Reading from the N-terminus, the 398-residue chain is Phosphomevalonate dehydratase large subunit (398 aa).

G48, V49, S50, N76, and P77 together coordinate (R)-5-phosphomevalonate. C116 contributes to the [4Fe-4S] cluster binding site. (R)-5-phosphomevalonate-binding residues include E136 and S137. 2 residues coordinate [4Fe-4S] cluster: C287 and C342. Residue K361 participates in (R)-5-phosphomevalonate binding.

Belongs to the AcnX type II large subunit family. Heterodimer composed of a large subunit (PMDh-L) and a small subunit (PMDh-S). [4Fe-4S] cluster serves as cofactor.

The enzyme catalyses (R)-5-phosphomevalonate = (2E)-3-methyl-5-phosphooxypent-2-enoate + H2O. The protein operates within isoprenoid biosynthesis; isopentenyl diphosphate biosynthesis via mevalonate pathway. In terms of biological role, component of a hydro-lyase that catalyzes the dehydration of mevalonate 5-phosphate (MVA5P) to form trans-anhydromevalonate 5-phosphate (tAHMP). Involved in the archaeal mevalonate (MVA) pathway, which provides fundamental precursors for isoprenoid biosynthesis, such as isopentenyl diphosphate (IPP) and dimethylallyl diphosphate (DMAPP). In Methanosarcina mazei (strain ATCC BAA-159 / DSM 3647 / Goe1 / Go1 / JCM 11833 / OCM 88) (Methanosarcina frisia), this protein is Phosphomevalonate dehydratase large subunit.